The chain runs to 203 residues: Endo-type membrane-bound lytic murein transglycosylase A (203 aa).

The first 15 residues, 1–15, serve as a signal peptide directing secretion; that stretch reads MKLRWLMWLVVFLAG. Residue Cys-16 is the site of N-palmitoyl cysteine attachment. A lipid anchor (S-diacylglycerol cysteine) is attached at Cys-16.

The protein belongs to the transglycosylase Slt family.

It is found in the cell outer membrane. The catalysed reaction is Endolytic cleavage of the (1-&gt;4)-beta-glycosidic linkage between N-acetylmuramic acid (MurNAc) and N-acetylglucosamine (GlcNAc) residues in peptidoglycan with concomitant formation of a 1,6-anhydrobond in the MurNAc residue.. Its function is as follows. Murein-degrading enzyme. May play a role in recycling of muropeptides during cell elongation and/or cell division. Preferentially cleaves at a distance of more than two disaccharide units from the ends of the glycan chain. This chain is Endo-type membrane-bound lytic murein transglycosylase A, found in Cronobacter sakazakii (strain ATCC BAA-894) (Enterobacter sakazakii).